Reading from the N-terminus, the 162-residue chain is UPF0114 protein Sden_0436 (162 aa).

Helical transmembrane passes span 15–35 (IMAP…IKFF), 53–73 (LVLI…LIMV), and 136–156 (IMWY…MGYL).

The protein belongs to the UPF0114 family.

Its subcellular location is the cell membrane. This is UPF0114 protein Sden_0436 from Shewanella denitrificans (strain OS217 / ATCC BAA-1090 / DSM 15013).